The following is a 266-amino-acid chain: Dickkopf-related protein 1 (266 aa).

The signal sequence occupies residues 1–31 (MMALGAAGATRVFVAMVAAALGGHPLLGVSA). O-linked (GalNAc...) serine glycosylation occurs at Ser-61. Cystine bridges form between Cys-85-Cys-97, Cys-91-Cys-111, Cys-114-Cys-128, Cys-121-Cys-133, Cys-127-Cys-138, Cys-189-Cys-201, Cys-195-Cys-210, Cys-200-Cys-237, Cys-220-Cys-245, and Cys-239-Cys-263. Residues 85–138 (CAEDEECGTDEYCASPTRGGDAGVQICLACRKRRKRCMRHAMCCPGNYCKNGIC) form a DKK-type Cys-1 region. The interval 189–263 (CLRSSDCASG…ASNSSRLHTC (75 aa)) is DKK-type Cys-2. A glycan (N-linked (GlcNAc...) asparagine) is linked at Asn-256.

The protein belongs to the dickkopf family. Interacts with LRP6. Interacts (via the C-terminal Cys-rich domain) with LRP5 (via beta-propeller regions 3 and 4); the interaction, enhanced by MESD and or KREMEN, antagonizes Wnt-mediated signaling. Forms a ternary complex with LRP6 and KREM1. Interacts with KREM1. Placenta.

The protein resides in the secreted. Antagonizes canonical Wnt signaling by inhibiting LRP5/6 interaction with Wnt and by forming a ternary complex with the transmembrane protein KREMEN that promotes internalization of LRP5/6. DKKs play an important role in vertebrate development, where they locally inhibit Wnt regulated processes such as antero-posterior axial patterning, limb development, somitogenesis and eye formation. In the adult, Dkks are implicated in bone formation and bone disease, cancer and Alzheimer disease. Inhibits the pro-apoptotic function of KREMEN1 in a Wnt-independent manner, and has anti-apoptotic activity. This chain is Dickkopf-related protein 1 (DKK1), found in Homo sapiens (Human).